A 353-amino-acid chain; its full sequence is Photosystem II protein D1 (353 aa).

Residue T2 is modified to N-acetylthreonine. T2 is modified (phosphothreonine). Transmembrane regions (helical) follow at residues 29–46, 118–133, and 142–156; these read YIGWFGVLMIPTLLTATS, HFLLGVACYMGREWEL, and WIAVAYSAPVAAATA. H118 is a chlorophyll a binding site. Y126 lines the pheophytin a pocket. Residues D170 and E189 each coordinate [CaMn4O5] cluster. The chain crosses the membrane as a helical span at residues 197–218; sequence FHMLGVAGVFGGSLFSAMHGSL. H198 lines the chlorophyll a pocket. A quinone-binding positions include H215 and 264-265; that span reads SF. Residue H215 coordinates Fe cation. H272 contributes to the Fe cation binding site. The chain crosses the membrane as a helical span at residues 274 to 288; that stretch reads FLAAWPVVGIWFTAL. Positions 332, 333, 342, and 344 each coordinate [CaMn4O5] cluster. Residues 345 to 353 constitute a propeptide that is removed on maturation; sequence AMEAPSVNG.

It belongs to the reaction center PufL/M/PsbA/D family. As to quaternary structure, PSII is composed of 1 copy each of membrane proteins PsbA, PsbB, PsbC, PsbD, PsbE, PsbF, PsbH, PsbI, PsbJ, PsbK, PsbL, PsbM, PsbT, PsbX, PsbY, PsbZ, Psb30/Ycf12, at least 3 peripheral proteins of the oxygen-evolving complex and a large number of cofactors. It forms dimeric complexes. The D1/D2 heterodimer binds P680, chlorophylls that are the primary electron donor of PSII, and subsequent electron acceptors. It shares a non-heme iron and each subunit binds pheophytin, quinone, additional chlorophylls, carotenoids and lipids. D1 provides most of the ligands for the Mn4-Ca-O5 cluster of the oxygen-evolving complex (OEC). There is also a Cl(-1) ion associated with D1 and D2, which is required for oxygen evolution. The PSII complex binds additional chlorophylls, carotenoids and specific lipids. is required as a cofactor. Tyr-161 forms a radical intermediate that is referred to as redox-active TyrZ, YZ or Y-Z. In terms of processing, C-terminally processed by CTPA; processing is essential to allow assembly of the oxygen-evolving complex and thus photosynthetic growth.

It is found in the plastid. The protein localises to the chloroplast thylakoid membrane. The enzyme catalyses 2 a plastoquinone + 4 hnu + 2 H2O = 2 a plastoquinol + O2. Photosystem II (PSII) is a light-driven water:plastoquinone oxidoreductase that uses light energy to abstract electrons from H(2)O, generating O(2) and a proton gradient subsequently used for ATP formation. It consists of a core antenna complex that captures photons, and an electron transfer chain that converts photonic excitation into a charge separation. The D1/D2 (PsbA/PsbD) reaction center heterodimer binds P680, the primary electron donor of PSII as well as several subsequent electron acceptors. The polypeptide is Photosystem II protein D1 (Phaseolus vulgaris (Kidney bean)).